A 199-amino-acid polypeptide reads, in one-letter code: Large ribosomal subunit protein bL25 (199 aa).

The protein belongs to the bacterial ribosomal protein bL25 family. CTC subfamily. Part of the 50S ribosomal subunit; part of the 5S rRNA/L5/L18/L25 subcomplex. Contacts the 5S rRNA. Binds to the 5S rRNA independently of L5 and L18.

Functionally, this is one of the proteins that binds to the 5S RNA in the ribosome where it forms part of the central protuberance. The polypeptide is Large ribosomal subunit protein bL25 (Chlorobaculum tepidum (strain ATCC 49652 / DSM 12025 / NBRC 103806 / TLS) (Chlorobium tepidum)).